The sequence spans 413 residues: Gamma-glutamyl phosphate reductase (413 aa).

Belongs to the gamma-glutamyl phosphate reductase family.

It localises to the cytoplasm. The enzyme catalyses L-glutamate 5-semialdehyde + phosphate + NADP(+) = L-glutamyl 5-phosphate + NADPH + H(+). Its pathway is amino-acid biosynthesis; L-proline biosynthesis; L-glutamate 5-semialdehyde from L-glutamate: step 2/2. Its function is as follows. Catalyzes the NADPH-dependent reduction of L-glutamate 5-phosphate into L-glutamate 5-semialdehyde and phosphate. The product spontaneously undergoes cyclization to form 1-pyrroline-5-carboxylate. The sequence is that of Gamma-glutamyl phosphate reductase from Lactococcus lactis subsp. cremoris (strain SK11).